Here is a 278-residue protein sequence, read N- to C-terminus: 4-deoxy-L-threo-5-hexosulose-uronate ketol-isomerase (278 aa).

The Zn(2+) site is built by His-196, His-198, Glu-203, and His-245.

It belongs to the KduI family. It depends on Zn(2+) as a cofactor.

The catalysed reaction is 5-dehydro-4-deoxy-D-glucuronate = 3-deoxy-D-glycero-2,5-hexodiulosonate. The protein operates within glycan metabolism; pectin degradation; 2-dehydro-3-deoxy-D-gluconate from pectin: step 4/5. Its function is as follows. Catalyzes the isomerization of 5-dehydro-4-deoxy-D-glucuronate to 3-deoxy-D-glycero-2,5-hexodiulosonate. The polypeptide is 4-deoxy-L-threo-5-hexosulose-uronate ketol-isomerase (Salmonella agona (strain SL483)).